The primary structure comprises 422 residues: Fasciclin-like arabinogalactan protein 10 (422 aa).

A signal peptide spans methionine 1–glycine 25. FAS1 domains lie at histidine 26 to isoleucine 172 and glycine 187 to leucine 327. N-linked (GlcNAc...) asparagine glycosylation is found at asparagine 27, asparagine 128, asparagine 162, asparagine 190, and asparagine 244. The disordered stretch occupies residues serine 336–lysine 397. A compositionally biased stretch (pro residues) spans alanine 340–proline 374. Polar residues predominate over residues aspartate 386–lysine 397. Asparagine 398 carries the GPI-anchor amidated asparagine lipid modification. A propeptide spans alanine 399–leucine 422 (removed in mature form).

Belongs to the fasciclin-like AGP family.

The protein localises to the cell membrane. Its function is as follows. May be a cell surface adhesion protein. In Arabidopsis thaliana (Mouse-ear cress), this protein is Fasciclin-like arabinogalactan protein 10 (FLA10).